A 154-amino-acid polypeptide reads, in one-letter code: Putative pre-16S rRNA nuclease (154 aa).

The protein belongs to the YqgF nuclease family.

It is found in the cytoplasm. In terms of biological role, could be a nuclease involved in processing of the 5'-end of pre-16S rRNA. In Gluconacetobacter diazotrophicus (strain ATCC 49037 / DSM 5601 / CCUG 37298 / CIP 103539 / LMG 7603 / PAl5), this protein is Putative pre-16S rRNA nuclease.